The sequence spans 418 residues: Gamma-glutamyl phosphate reductase (418 aa).

This sequence belongs to the gamma-glutamyl phosphate reductase family.

Its subcellular location is the cytoplasm. The catalysed reaction is L-glutamate 5-semialdehyde + phosphate + NADP(+) = L-glutamyl 5-phosphate + NADPH + H(+). It functions in the pathway amino-acid biosynthesis; L-proline biosynthesis; L-glutamate 5-semialdehyde from L-glutamate: step 2/2. Functionally, catalyzes the NADPH-dependent reduction of L-glutamate 5-phosphate into L-glutamate 5-semialdehyde and phosphate. The product spontaneously undergoes cyclization to form 1-pyrroline-5-carboxylate. The chain is Gamma-glutamyl phosphate reductase from Histophilus somni (strain 2336) (Haemophilus somnus).